The sequence spans 182 residues: Ribulose bisphosphate carboxylase small subunit, chloroplastic 6 (182 aa).

The transit peptide at 1–41 (MAATMMSKTIISSKQCSKPIAPPKVSINKGFVNTSAAIKNR) directs the protein to the chloroplast.

Belongs to the RuBisCO small chain family. Heterohexadecamer of 8 large and 8 small subunits.

Its subcellular location is the plastid. It localises to the chloroplast. Functionally, ruBisCO catalyzes two reactions: the carboxylation of D-ribulose 1,5-bisphosphate, the primary event in carbon dioxide fixation, as well as the oxidative fragmentation of the pentose substrate. Both reactions occur simultaneously and in competition at the same active site. Although the small subunit is not catalytic it is essential for maximal activity. The sequence is that of Ribulose bisphosphate carboxylase small subunit, chloroplastic 6 from Acetabularia peniculus (Green alga).